A 157-amino-acid polypeptide reads, in one-letter code: UPF0262 protein amb3341 (157 aa).

Belongs to the UPF0262 family.

This is UPF0262 protein amb3341 from Paramagnetospirillum magneticum (strain ATCC 700264 / AMB-1) (Magnetospirillum magneticum).